Reading from the N-terminus, the 106-residue chain is Small ribosomal subunit protein bS16 (106 aa).

The interval 84-106 is disordered; it reads KREARNNPEKAVPRKERKAADGK.

The protein is Small ribosomal subunit protein bS16 of Rhodopseudomonas palustris (strain ATCC BAA-98 / CGA009).